Reading from the N-terminus, the 311-residue chain is Porphobilinogen deaminase (311 aa).

Cys-243 bears the S-(dipyrrolylmethanemethyl)cysteine mark.

This sequence belongs to the HMBS family. Monomer. It depends on dipyrromethane as a cofactor.

The catalysed reaction is 4 porphobilinogen + H2O = hydroxymethylbilane + 4 NH4(+). It participates in porphyrin-containing compound metabolism; protoporphyrin-IX biosynthesis; coproporphyrinogen-III from 5-aminolevulinate: step 2/4. Its function is as follows. Tetrapolymerization of the monopyrrole PBG into the hydroxymethylbilane pre-uroporphyrinogen in several discrete steps. This chain is Porphobilinogen deaminase, found in Blochmanniella floridana.